The chain runs to 104 residues: Small ribosomal subunit protein uS10 (104 aa).

Belongs to the universal ribosomal protein uS10 family. Part of the 30S ribosomal subunit.

Functionally, involved in the binding of tRNA to the ribosomes. The chain is Small ribosomal subunit protein uS10 from Buchnera aphidicola subsp. Baizongia pistaciae (strain Bp).